The following is a 119-amino-acid chain: Large ribosomal subunit protein bL19 (119 aa).

It belongs to the bacterial ribosomal protein bL19 family.

This protein is located at the 30S-50S ribosomal subunit interface and may play a role in the structure and function of the aminoacyl-tRNA binding site. This Arthrobacter sp. (strain FB24) protein is Large ribosomal subunit protein bL19.